Consider the following 260-residue polypeptide: Hydroxyethylthiazole kinase 1 (260 aa).

Met-39 lines the substrate pocket. 2 residues coordinate ATP: Arg-115 and Thr-160. Gly-187 lines the substrate pocket.

Belongs to the Thz kinase family. The cofactor is Mg(2+).

The catalysed reaction is 5-(2-hydroxyethyl)-4-methylthiazole + ATP = 4-methyl-5-(2-phosphooxyethyl)-thiazole + ADP + H(+). It participates in cofactor biosynthesis; thiamine diphosphate biosynthesis; 4-methyl-5-(2-phosphoethyl)-thiazole from 5-(2-hydroxyethyl)-4-methylthiazole: step 1/1. Its function is as follows. Catalyzes the phosphorylation of the hydroxyl group of 4-methyl-5-beta-hydroxyethylthiazole (THZ). The sequence is that of Hydroxyethylthiazole kinase 1 from Streptococcus pneumoniae serotype 19F (strain G54).